The primary structure comprises 327 residues: Pyruvate dehydrogenase E1 component subunit beta (327 aa).

Glu60 provides a ligand contact to thiamine diphosphate. K(+) contacts are provided by Val113, Ala161, Ile162, and Glu164.

Heterodimer of an alpha and a beta chain. It depends on thiamine diphosphate as a cofactor.

The protein resides in the plastid. Its subcellular location is the chloroplast. It catalyses the reaction N(6)-[(R)-lipoyl]-L-lysyl-[protein] + pyruvate + H(+) = N(6)-[(R)-S(8)-acetyldihydrolipoyl]-L-lysyl-[protein] + CO2. Functionally, the pyruvate dehydrogenase complex catalyzes the overall conversion of pyruvate to acetyl-CoA and CO(2). It contains multiple copies of three enzymatic components: pyruvate dehydrogenase (E1), dihydrolipoamide acetyltransferase (E2) and lipoamide dehydrogenase (E3). The protein is Pyruvate dehydrogenase E1 component subunit beta (pdhB) of Cyanidium caldarium (Red alga).